The chain runs to 201 residues: Recombination protein RecR (201 aa).

The C4-type zinc finger occupies 57–72 (CSDCRTFTEQDVCAIC). The region spanning 81–176 (GQICVVESPA…MASRIAHGVP (96 aa)) is the Toprim domain.

It belongs to the RecR family.

May play a role in DNA repair. It seems to be involved in an RecBC-independent recombinational process of DNA repair. It may act with RecF and RecO. The sequence is that of Recombination protein RecR from Pectobacterium carotovorum subsp. carotovorum (strain PC1).